Here is a 185-residue protein sequence, read N- to C-terminus: MTKEIKADAKTRMDKAIDVLSRELAKLRAGRANPALLDRVTVEYYGAQTPLNQLASVTVPEARLLLITPYDKTAVASIEKAILKSDLGLTPSNDGQVIRIAIPPLTEERRKDLVRLVSKTAEESKVAVRNIRRDANDELKKLQKDGEMTEDELRSATDDIQKLTDTYVAKIDEKAKQKEQEIIEV.

This sequence belongs to the RRF family.

It localises to the cytoplasm. Responsible for the release of ribosomes from messenger RNA at the termination of protein biosynthesis. May increase the efficiency of translation by recycling ribosomes from one round of translation to another. The protein is Ribosome-recycling factor of Shouchella clausii (strain KSM-K16) (Alkalihalobacillus clausii).